A 119-amino-acid chain; its full sequence is Large ribosomal subunit protein bL19 (119 aa).

The protein belongs to the bacterial ribosomal protein bL19 family.

Functionally, this protein is located at the 30S-50S ribosomal subunit interface and may play a role in the structure and function of the aminoacyl-tRNA binding site. The chain is Large ribosomal subunit protein bL19 (rplS) from Mycoplasma genitalium (strain ATCC 33530 / DSM 19775 / NCTC 10195 / G37) (Mycoplasmoides genitalium).